A 532-amino-acid chain; its full sequence is Protein DETOXIFICATION 51 (532 aa).

The next 12 membrane-spanning stretches (helical) occupy residues 65-85, 98-118, 142-162, 176-196, 208-228, 238-258, 290-310, 316-336, 358-378, 395-415, 439-459, and 461-481; these read FPIA…MFFL, LAIA…ALGM, VVFL…VGKI, AQTY…LHPI, PVTL…LFLV, VAVA…CYVW, VSVC…GLLV, VAAM…PSSL, LTAT…AAFA, ILQL…GNCP, AFYL…GIGF, and GLWV…MYVV.

The protein belongs to the multi antimicrobial extrusion (MATE) (TC 2.A.66.1) family. As to expression, expressed in the meristematic regions. Mainly detected in tissues where cells were actively dividing, such as leaf primordia and young leaves, the junction between lateral root and the primary root, root cap, hydathodes, the junction between secondary inflorescence and the main inflorescence, young stamen and young siliques. Highly expressed at the junction between the hypocotyl and the root, and at the marginal areas of cotyledons and true leaves, coinciding with the locations of the hydathode. Also highly expressed at the basal regions of the newly emerged lateral roots. In the floral organs, mostly expressed at the style of the pistil.

The protein resides in the endosome membrane. Its subcellular location is the late endosome membrane. Functions as a multidrug and toxin extrusion transporter that negatively regulates plant disease resistance. Plays an important role in maintaining normal plant architecture, possibly by regulating local auxin biosynthesis. May act as a negative regulator of hypocotyl cell elongation in the light. In Arabidopsis thaliana (Mouse-ear cress), this protein is Protein DETOXIFICATION 51.